We begin with the raw amino-acid sequence, 226 residues long: Sugar fermentation stimulation protein homolog (226 aa).

The protein belongs to the SfsA family.

This chain is Sugar fermentation stimulation protein homolog, found in Clostridium beijerinckii (strain ATCC 51743 / NCIMB 8052) (Clostridium acetobutylicum).